A 317-amino-acid chain; its full sequence is Beta-ketoacyl-[acyl-carrier-protein] synthase III (317 aa).

Catalysis depends on residues C112 and H244. The ACP-binding stretch occupies residues 245–249 (QANIR). N274 is an active-site residue.

Belongs to the thiolase-like superfamily. FabH family. Homodimer.

It is found in the cytoplasm. It catalyses the reaction malonyl-[ACP] + acetyl-CoA + H(+) = 3-oxobutanoyl-[ACP] + CO2 + CoA. It participates in lipid metabolism; fatty acid biosynthesis. Its function is as follows. Catalyzes the condensation reaction of fatty acid synthesis by the addition to an acyl acceptor of two carbons from malonyl-ACP. Catalyzes the first condensation reaction which initiates fatty acid synthesis and may therefore play a role in governing the total rate of fatty acid production. Possesses both acetoacetyl-ACP synthase and acetyl transacylase activities. Its substrate specificity determines the biosynthesis of branched-chain and/or straight-chain of fatty acids. The polypeptide is Beta-ketoacyl-[acyl-carrier-protein] synthase III (Rickettsia felis (strain ATCC VR-1525 / URRWXCal2) (Rickettsia azadi)).